The chain runs to 611 residues: Probable methyltransferase PMT1 (611 aa).

At 1–11 (MRGRSEGGKKK) the chain is on the cytoplasmic side. Residues 12-32 (PVIVLLCVASVVLVFVYLFFG) form a helical; Signal-anchor for type II membrane protein membrane-spanning segment. The Lumenal segment spans residues 33–611 (SSNHKAIEYG…LTSESLRDLE (579 aa)). Asparagine 345 carries N-linked (GlcNAc...) asparagine glycosylation.

The protein belongs to the methyltransferase superfamily.

Its subcellular location is the golgi apparatus membrane. The sequence is that of Probable methyltransferase PMT1 from Arabidopsis thaliana (Mouse-ear cress).